Here is a 614-residue protein sequence, read N- to C-terminus: DNA mismatch repair protein MutL (614 aa).

This sequence belongs to the DNA mismatch repair MutL/HexB family.

In terms of biological role, this protein is involved in the repair of mismatches in DNA. It is required for dam-dependent methyl-directed DNA mismatch repair. May act as a 'molecular matchmaker', a protein that promotes the formation of a stable complex between two or more DNA-binding proteins in an ATP-dependent manner without itself being part of a final effector complex. This is DNA mismatch repair protein MutL from Leptospira biflexa serovar Patoc (strain Patoc 1 / ATCC 23582 / Paris).